Consider the following 449-residue polypeptide: Glutamate--tRNA ligase (449 aa).

Residues 10 to 20 (PSPTGHLHIGN) carry the 'HIGH' region motif. Residues 214–218 (KLSKR) carry the 'KMSKS' region motif. Position 217 (lysine 217) interacts with ATP.

Belongs to the class-I aminoacyl-tRNA synthetase family. Glutamate--tRNA ligase type 1 subfamily. Monomer.

The protein localises to the cytoplasm. It catalyses the reaction tRNA(Glu) + L-glutamate + ATP = L-glutamyl-tRNA(Glu) + AMP + diphosphate. In terms of biological role, catalyzes the attachment of glutamate to tRNA(Glu) in a two-step reaction: glutamate is first activated by ATP to form Glu-AMP and then transferred to the acceptor end of tRNA(Glu). The sequence is that of Glutamate--tRNA ligase from Acholeplasma laidlawii (strain PG-8A).